Reading from the N-terminus, the 298-residue chain is GTPase Era (298 aa).

Positions 8-176 (HCGSVAVIGR…VRDVLKLLPE (169 aa)) constitute an Era-type G domain. Residues 16–23 (GRPNVGKS) form a G1 region. 16-23 (GRPNVGKS) provides a ligand contact to GTP. Positions 42-46 (QTTRH) are G2. The interval 63-66 (DTPG) is G3. GTP is bound by residues 63–67 (DTPGL) and 125–128 (NKID). The tract at residues 125–128 (NKID) is G4. Residues 155-157 (ISA) are G5. One can recognise a KH type-2 domain in the interval 199 to 283 (VREQLMRQLG…FLETWVRVRE (85 aa)).

The protein belongs to the TRAFAC class TrmE-Era-EngA-EngB-Septin-like GTPase superfamily. Era GTPase family. In terms of assembly, monomer.

The protein localises to the cytoplasm. The protein resides in the cell inner membrane. Its function is as follows. An essential GTPase that binds both GDP and GTP, with rapid nucleotide exchange. Plays a role in 16S rRNA processing and 30S ribosomal subunit biogenesis and possibly also in cell cycle regulation and energy metabolism. This Stenotrophomonas maltophilia (strain K279a) protein is GTPase Era.